Reading from the N-terminus, the 664-residue chain is DCC-interacting protein 13-beta (664 aa).

The segment at 1–428 is required for RAB5A binding; it reads MPAVDKLLLE…NSEMENENDK (428 aa). The 266-residue stretch at 3-268 folds into the BAR domain; it reads AVDKLLLEEA…ESVYTPDSDV (266 aa). The PH domain occupies 277 to 375; the sequence is LIQKAGYLNL…WICAINNISR (99 aa). In terms of domain architecture, PID spans 488–637; that stretch reads SLLQQMFIVR…LMLSIPLTND (150 aa). The interval 643-664 is disordered; that stretch reads LNDQPDDDDGNPNEHRGAESEA. The segment covering 654–664 has biased composition (basic and acidic residues); it reads PNEHRGAESEA.

Homodimer. Homotetramer. Binds RAB5A/Rab5 through an N-terminal domain. This interaction is essential for its recruitment to endosomal membranes as well as its role in cell proliferation. Binds subunits of the NuRD/MeCP1 complex. Interacts with FSHR; interaction is independent of follicle stimulating hormone stimulation. Interacts with APPL1; the interaction is decreased by adiponectin in a time-dependent manner. Forms a complex comprising APPL1, RUVBL2, CTNNB1, HDAC1 and HDAC2; interaction reduces interaction between CTNNB1, HDAC1, HDAC2 and RUVBL2 leading to the decrease of deacetylase activity of this complex; affects the recruitment of repressive complexes to the Wnt target genes. Interacts (via BAR domain) with TBC1D1; interaction is dependent of TBC1D1 phosphorylation at 'Ser-235'; interaction diminishes the phosphorylation of TBC1D1 at 'Thr-596', resulting in inhibition of SLC2A4 translocation and glucose uptake. Interacts with ANXA2; targets APPL2 to endosomes and acting in parallel to RAB5A. Interacts with RAB31 (in GTP-bound form); interaction contributes to or enhances recruitment of APPL2 to the phagosomes; interaction enhances Fc-gamma receptor-mediated phagocytosis through PI3K/Akt signaling in macrophages. Interacts with PIK3R1; forms a complex with PIK3R1 and APPL1. Interacts (via BAR domain) with ADIPOR1; hinders the accessibility of APPL1 to ADIPOR1; negatively regulates adiponectin signaling; ADIPOQ dissociates this interaction and facilitates the recruitment of APPL1 to ADIPOR1. Interacts (via BAR domain) with ADIPOR2; ADIPOQ dissociates this interaction. High levels in brain, heart, kidney and skeletal muscle.

The protein localises to the early endosome membrane. It localises to the nucleus. Its subcellular location is the cell membrane. The protein resides in the endosome membrane. It is found in the cytoplasm. The protein localises to the cytoplasmic vesicle. It localises to the phagosome. Its subcellular location is the cell projection. The protein resides in the ruffle. It is found in the ruffle membrane. The protein localises to the phagosome membrane. Multifunctional adapter protein that binds to various membrane receptors, nuclear factors and signaling proteins to regulate many processes, such as cell proliferation, immune response, endosomal trafficking and cell metabolism. Regulates signaling pathway leading to cell proliferation through interaction with RAB5A and subunits of the NuRD/MeCP1 complex. Plays a role in immune response by modulating phagocytosis, inflammatory and innate immune responses. In macrophages, enhances Fc-gamma receptor-mediated phagocytosis through interaction with RAB31 leading to activation of PI3K/Akt signaling. In response to LPS, modulates inflammatory responses by playing a key role on the regulation of TLR4 signaling and in the nuclear translocation of RELA/NF-kappa-B p65 and the secretion of pro- and anti-inflammatory cytokines. Also functions as a negative regulator of innate immune response via inhibition of AKT1 signaling pathway by forming a complex with APPL1 and PIK3R1. Plays a role in endosomal trafficking of TGFBR1 from the endosomes to the nucleus. Plays a role in cell metabolism by regulating adiponecting ans insulin signaling pathways and adaptative thermogenesis. In muscle, negatively regulates adiponectin-simulated glucose uptake and fatty acid oxidation by inhibiting adiponectin signaling pathway through APPL1 sequestration thereby antagonizing APPL1 action. In muscles, negatively regulates insulin-induced plasma membrane recruitment of GLUT4 and glucose uptake through interaction with TBC1D1. Plays a role in cold and diet-induced adaptive thermogenesis by activating ventromedial hypothalamus (VMH) neurons throught AMPK inhibition which enhances sympathetic outflow to subcutaneous white adipose tissue (sWAT), sWAT beiging and cold tolerance. Also plays a role in other signaling pathways namely Wnt/beta-catenin, HGF and glucocorticoid receptor signaling. Positive regulator of beta-catenin/TCF-dependent transcription through direct interaction with RUVBL2/reptin resulting in the relief of RUVBL2-mediated repression of beta-catenin/TCF target genes by modulating the interactions within the beta-catenin-reptin-HDAC complex. May affect adult neurogenesis in hippocampus and olfactory system via regulating the sensitivity of glucocorticoid receptor. Required for fibroblast migration through HGF cell signaling. The sequence is that of DCC-interacting protein 13-beta from Homo sapiens (Human).